The primary structure comprises 603 residues: MSEYRIRVTTVDQKVGIFQVPRTKTVLELKELIAVTFEAPADRLKLIHAGRVLRNETPLEEILHDATDLVTFHLVIAVFNSTSTTLPSATSSSVPQSRTSELSSTNSIPTPRITSLNPEELSRRERAQRLLQTYNSFHGSGLGGLFPNIHRELESHGFSLPTHEQSSPVAESLDNSVSSALSPHLETLRRRNLSIHHQHIQAHEMAQESLETRNPGNISSSSAPLASDQSPTVSSNHIHASGNLALGSNSGLNPRSPNSFSSPLDNPALHTVDSTNVNGSLSPLSNSSSINQVHQNETHGSTISVPNPNLSQMGPSHSSSVPSNLSPNPAQNENPSTTSIPSINNQPFPSGLSASNSNFASSSFIPQSVPQLLPIYYQTIFYNGNYYLQQLPSASPPTMFRDHSFAPLVSPSIVSPYGVLENEETGECAFLFSPNASQPHFQPRAPTFGIPRNVRSLFTLPFFHTIRNIERHFRLFIRLALFCVLTTYNVSLSQTILLTSIMSVVFLLQTGALAPFINDNPLIQSGMRHIRNLQDEYRRRRNRTAQRVVEIPNETQTEDEQDGTNTPDNRADAEERELTRSQRIYRTVVRTIVAFALSFVPRA.

Residues 4–79 enclose the Ubiquitin-like domain; sequence YRIRVTTVDQ…VTFHLVIAVF (76 aa). 3 disordered regions span residues 85–121, 159–178, and 206–348; these read TLPS…PEEL, SLPT…NSVS, and AQES…NQPF. Composition is skewed to polar residues over residues 94-117 and 162-178; these read VPQS…TSLN and THEQ…NSVS. Low complexity predominate over residues 219–231; it reads SSSSAPLASDQSP. Polar residues predominate over residues 246–264; it reads LGSNSGLNPRSPNSFSSPL. A compositionally biased stretch (low complexity) spans 280–289; sequence SLSPLSNSSS. Polar residues predominate over residues 290–314; that stretch reads INQVHQNETHGSTISVPNPNLSQMG. Low complexity predominate over residues 315 to 329; that stretch reads PSHSSSVPSNLSPNP. Polar residues predominate over residues 330 to 348; sequence AQNENPSTTSIPSINNQPF. Residues 496–516 form a helical membrane-spanning segment; the sequence is ILLTSIMSVVFLLQTGALAPF. The disordered stretch occupies residues 544–578; sequence TAQRVVEIPNETQTEDEQDGTNTPDNRADAEEREL. Residue threonine 566 is modified to Phosphothreonine. The span at 569 to 578 shows a compositional bias: basic and acidic residues; sequence NRADAEEREL.

It is found in the endoplasmic reticulum membrane. This is an uncharacterized protein from Schizosaccharomyces pombe (strain 972 / ATCC 24843) (Fission yeast).